A 451-amino-acid chain; its full sequence is Phosphoglucosamine mutase (451 aa).

The active-site Phosphoserine intermediate is the Ser102. The Mg(2+) site is built by Ser102, Asp242, Asp244, and Asp246. Ser102 carries the post-translational modification Phosphoserine.

Belongs to the phosphohexose mutase family. Mg(2+) is required as a cofactor. In terms of processing, activated by phosphorylation.

The catalysed reaction is alpha-D-glucosamine 1-phosphate = D-glucosamine 6-phosphate. In terms of biological role, catalyzes the conversion of glucosamine-6-phosphate to glucosamine-1-phosphate. This Staphylococcus aureus (strain bovine RF122 / ET3-1) protein is Phosphoglucosamine mutase.